We begin with the raw amino-acid sequence, 96 residues long: Small ribosomal subunit protein bS6 (96 aa).

Belongs to the bacterial ribosomal protein bS6 family.

In terms of biological role, binds together with bS18 to 16S ribosomal RNA. In Streptococcus thermophilus (strain ATCC BAA-250 / LMG 18311), this protein is Small ribosomal subunit protein bS6.